The sequence spans 179 residues: MAELATIARPYAEALFRVAEGGDISAWSTLVQELAQVAQLPEVLSVASSPKVSRTQVAELLLAALKSPLASGAQAKNFVQMLVDNHRIALLPEIAVQFEALKNAREGAADVQIVSAFPLEGAQLAELVTSLERKFKRKLKPAVEVDSSLIGGVRVTVGDEVLDTSVRARLAGMQAALTA.

It belongs to the ATPase delta chain family. F-type ATPases have 2 components, F(1) - the catalytic core - and F(0) - the membrane proton channel. F(1) has five subunits: alpha(3), beta(3), gamma(1), delta(1), epsilon(1). F(0) has three main subunits: a(1), b(2) and c(10-14). The alpha and beta chains form an alternating ring which encloses part of the gamma chain. F(1) is attached to F(0) by a central stalk formed by the gamma and epsilon chains, while a peripheral stalk is formed by the delta and b chains.

The protein resides in the cell inner membrane. Functionally, f(1)F(0) ATP synthase produces ATP from ADP in the presence of a proton or sodium gradient. F-type ATPases consist of two structural domains, F(1) containing the extramembraneous catalytic core and F(0) containing the membrane proton channel, linked together by a central stalk and a peripheral stalk. During catalysis, ATP synthesis in the catalytic domain of F(1) is coupled via a rotary mechanism of the central stalk subunits to proton translocation. Its function is as follows. This protein is part of the stalk that links CF(0) to CF(1). It either transmits conformational changes from CF(0) to CF(1) or is implicated in proton conduction. This Burkholderia mallei (strain NCTC 10247) protein is ATP synthase subunit delta.